A 53-amino-acid chain; its full sequence is FLGTINLSLCEQERDADEEKRDEPDESDVEVEKRFLPAALAGIGGILGKLFGK.

A signal peptide spans 1 to 10 (FLGTINLSLC). A propeptide spanning residues 11-34 (EQERDADEEKRDEPDESDVEVEKR) is cleaved from the precursor. The residue at position 51 (F51) is a Phenylalanine amide.

The protein resides in the secreted. It is found in the target cell membrane. Functionally, non-amphipathic mildly cationic alpha-helical antimicrobial peptide with potent activity against Gram-positive (including methicillin-resistant Staphylococcus aureus (MRSA)) and Gram-negative bacteria, and some fungi, as well as against Trypanosoma and Leishmania (both promastigote and amastigote forms). Strongly and selectively perturbs anionic bilayer membranes by interacting with the polar head groups and acyl region of the phospholipids, with formation of regions of two coexisting phases, one phase rich in peptide and the other lipid-rich. Shows low hemolytic activity (LC(50)=44 uM) and a low toxicity for human monocytes THP-1 and THP-1-derived macrophages. Is not toxic to human hepatoma-derived cells. The protein is Temporin-SHd of Pelophylax saharicus (Sahara frog).